A 353-amino-acid polypeptide reads, in one-letter code: Cruciform cutting endonuclease 1, mitochondrial (353 aa).

Mg(2+) is bound by residues aspartate 293 and aspartate 294.

In terms of assembly, homodimer. Requires Mg(2+) as cofactor.

The protein resides in the mitochondrion. It carries out the reaction Endonucleolytic cleavage at a junction such as a reciprocal single-stranded crossover between two homologous DNA duplexes (Holliday junction).. Capable of resolving Holliday junctions. Specific for 4-way junctions. Seems to be important for the maintenance of mitochondrial DNA. Cleaves fixed junctions at the point of strand exchange. Cleaves after 5'-CT-3' sequence. The polypeptide is Cruciform cutting endonuclease 1, mitochondrial (CCE1) (Saccharomyces cerevisiae (strain ATCC 204508 / S288c) (Baker's yeast)).